The following is a 627-amino-acid chain: DNA topoisomerase 4 subunit B (627 aa).

Residues tyrosine 4, asparagine 41, aspartate 68, 109–115 (GLHGVGV), and lysine 333 each bind ATP. One can recognise a Toprim domain in the interval 412–525 (TELFIVEGDS…NGHIYIAQPP (114 aa)). The Mg(2+) site is built by glutamate 418, aspartate 490, and aspartate 492.

It belongs to the type II topoisomerase family. ParE type 1 subfamily. Heterotetramer composed of ParC and ParE. The cofactor is Mg(2+). Mn(2+) serves as cofactor. Ca(2+) is required as a cofactor.

The catalysed reaction is ATP-dependent breakage, passage and rejoining of double-stranded DNA.. Its activity is regulated as follows. Pyrrolopyrimidines inhibit both GyrB and its paralog in topoisomerase IV (parE). Functionally, topoisomerase IV is essential for chromosome segregation. It relaxes supercoiled DNA. Performs the decatenation events required during the replication of a circular DNA molecule. The sequence is that of DNA topoisomerase 4 subunit B from Francisella tularensis subsp. holarctica (strain LVS).